The following is a 191-amino-acid chain: Fe/S biogenesis protein NfuA (191 aa).

[4Fe-4S] cluster contacts are provided by Cys149 and Cys152.

It belongs to the NfuA family. In terms of assembly, homodimer. It depends on [4Fe-4S] cluster as a cofactor.

In terms of biological role, involved in iron-sulfur cluster biogenesis. Binds a 4Fe-4S cluster, can transfer this cluster to apoproteins, and thereby intervenes in the maturation of Fe/S proteins. Could also act as a scaffold/chaperone for damaged Fe/S proteins. The chain is Fe/S biogenesis protein NfuA from Erwinia tasmaniensis (strain DSM 17950 / CFBP 7177 / CIP 109463 / NCPPB 4357 / Et1/99).